Consider the following 460-residue polypeptide: Cell death abnormality protein 8 (460 aa).

The Cytoplasmic segment spans residues 1–45; it reads MYLKKHESKLLLIPKNEDKEDAGIIAVLTDRVPSVLIVRWFDLFC. The helical transmembrane segment at 46–66 threads the bilayer; it reads FGFAMCSYVLDFFSDIGIAIF. The Extracellular segment spans residues 67-77; it reads HFWAGRHLSGA. Residues 78–98 form a helical membrane-spanning segment; sequence LVLTFALIPSVIINIISMVWM. Residues 99–123 are Cytoplasmic-facing; the sequence is LDDEMHWKRRAHPRRTGTFELNQKR. A helical membrane pass occupies residues 124-144; it reads FISLGKMITLCIFQMGPLFWY. Topologically, residues 145–219 are extracellular; the sequence is YKALYYGWMF…YYISGKYPYW (75 aa). A helical transmembrane segment spans residues 220–240; it reads LYFQAASLTLSIISISWSVVV. Residues 241–274 lie on the Cytoplasmic side of the membrane; that stretch reads QNRSLRMTRDDKVNIWPHEAVLQFCWRFLTILAR. A helical transmembrane segment spans residues 275–295; the sequence is IITLVAFVLLFGIYVVFLIFG. Over 296–320 the chain is Extracellular; the sequence is HLIVTLVHVIFLQALHIEACTHIEK. A helical transmembrane segment spans residues 321–341; it reads LLLLINAMIHLFTPFNMAEGN. Topologically, residues 342–353 are cytoplasmic; the sequence is TRYRYLVAYTVE. Residues 354-374 form a helical membrane-spanning segment; that stretch reads FIEMMIIFLLLPTPLDAFPLI. Topologically, residues 375–378 are extracellular; the sequence is EKIR. The chain crosses the membrane as a helical span at residues 379–399; sequence IGVPATFFIGIFIMLIYYKFF. Residues 400–460 are Cytoplasmic-facing; it reads HPNRRQDLEA…SLLEEDECHN (61 aa).

Belongs to the XK family. In terms of processing, cleavage by ced-3 activates ced-8 function in promoting phosphatidylserine exposure at the surface of apoptotic cells.

It is found in the cell membrane. Acts downstream of ced-9 and caspase ced-3 to promote phosphatidylserine exposure on apoptotic cell surface, possibly by mediating phospholipid scrambling. Phosphatidylserine is a specific marker only present at the surface of apoptotic cells and acts as a specific signal for engulfment. Regulates apoptosis kinetics during embryonic development. Not required for engulfment of germ cell corpses. This Caenorhabditis briggsae protein is Cell death abnormality protein 8.